Here is a 599-residue protein sequence, read N- to C-terminus: Elongation factor 4 (599 aa).

A tr-type G domain is found at Asn-2–Lys-184. GTP-binding positions include Asp-14 to Thr-19 and Asn-131 to Asp-134.

This sequence belongs to the TRAFAC class translation factor GTPase superfamily. Classic translation factor GTPase family. LepA subfamily.

It is found in the cell membrane. The enzyme catalyses GTP + H2O = GDP + phosphate + H(+). Its function is as follows. Required for accurate and efficient protein synthesis under certain stress conditions. May act as a fidelity factor of the translation reaction, by catalyzing a one-codon backward translocation of tRNAs on improperly translocated ribosomes. Back-translocation proceeds from a post-translocation (POST) complex to a pre-translocation (PRE) complex, thus giving elongation factor G a second chance to translocate the tRNAs correctly. Binds to ribosomes in a GTP-dependent manner. The polypeptide is Elongation factor 4 (Hamiltonella defensa subsp. Acyrthosiphon pisum (strain 5AT)).